The sequence spans 309 residues: Formimidoylglutamase (309 aa).

6 residues coordinate Mn(2+): His-128, Asp-153, His-155, Asp-157, Cys-240, and Asp-242.

Belongs to the arginase family. It depends on Mn(2+) as a cofactor.

It carries out the reaction N-formimidoyl-L-glutamate + H2O = formamide + L-glutamate. It participates in amino-acid degradation; L-histidine degradation into L-glutamate; L-glutamate from N-formimidoyl-L-glutamate (hydrolase route): step 1/1. Its function is as follows. Catalyzes the conversion of N-formimidoyl-L-glutamate to L-glutamate and formamide. In Staphylococcus carnosus (strain TM300), this protein is Formimidoylglutamase.